A 132-amino-acid chain; its full sequence is CLAVATA3/ESR (CLE)-related protein TDIF (132 aa).

The signal sequence occupies residues 1-26; it reads MDIDLLWSFGGWFFILFPETINYCMA. Residues 42–62 form a helical membrane-spanning segment; it reads SCSSLFFVALLIITILITMLQ. Positions 68 to 77 are enriched in polar residues; the sequence is EVTSLPTHQP. The interval 68–132 is disordered; sequence EVTSLPTHQP…PSGPNPISNR (65 aa). Low complexity predominate over residues 87-96; the sequence is STSSTATTTT. Residues 101–111 are compositionally biased toward basic residues; sequence KRTHHQSHPKP. A hydroxyproline mark is found at Pro123 and Pro126. A glycan (O-linked (Ara...) hydroxyproline) is linked at Pro126.

Belongs to the CLV3/ESR signal peptide family. As to quaternary structure, interacts specifically with the leucine-rich repeat receptor-like protein kinase TDR. Post-translationally, the TDIFp peptide contains two hydroxprolines, but hydroxylation had no direct effect on TDIFp activity. In terms of processing, the O-glycosylation (arabinosylation) of the hydroxyproline Pro-126 enhances binding affinity of the TDIFp peptide for its receptor.

It is found in the secreted. The protein localises to the extracellular space. It localises to the cell membrane. In terms of biological role, extracellular signal peptide that regulates cell fate. Represses tracheary element differentiation but promotes the formation of procambial cells adjacent to phloem cells in the veins. The chain is CLAVATA3/ESR (CLE)-related protein TDIF from Zinnia elegans (Garden zinnia).